Consider the following 285-residue polypeptide: Probable ribosomal RNA small subunit methyltransferase A (285 aa).

6 residues coordinate S-adenosyl-L-methionine: His-29, Leu-31, Gly-58, Glu-79, Asp-107, and Asn-122.

It belongs to the class I-like SAM-binding methyltransferase superfamily. rRNA adenine N(6)-methyltransferase family. RsmA subfamily.

The protein resides in the cytoplasm. In terms of biological role, specifically dimethylates two adjacent adenosines in the loop of a conserved hairpin near the 3'-end of 16S rRNA in the 30S particle. May play a critical role in biogenesis of 30S subunits. The chain is Probable ribosomal RNA small subunit methyltransferase A from Haloarcula marismortui (strain ATCC 43049 / DSM 3752 / JCM 8966 / VKM B-1809) (Halobacterium marismortui).